The sequence spans 155 residues: Gene 27 protein (155 aa).

Residues 41-114 form a disordered region; sequence KAKTQGMNVP…KAPENPNLPN (74 aa). Basic and acidic residues-rich tracts occupy residues 55 to 68 and 78 to 95; these read KKPE…EKPT and TAKE…ETKA.

Functionally, required for late gene transcription and DNA replication. The protein is Gene 27 protein (27) of Bacillus subtilis (Bacteriophage SP01).